We begin with the raw amino-acid sequence, 1588 residues long: Pentafunctional AROM polypeptide (1588 aa).

The interval 1 to 392 (MVQLAKVPIL…YGDSAQFVSD (392 aa)) is 3-dehydroquinate synthase. Residues 43–45 (DTN), 78–81 (ETSK), 109–111 (GGV), and Asp-114 contribute to the NAD(+) site. Position 125 (Arg-125) interacts with 7-phospho-2-dehydro-3-deoxy-D-arabino-heptonate. Residue 134 to 135 (TS) coordinates NAD(+). Asp-141 and Lys-147 together coordinate 7-phospho-2-dehydro-3-deoxy-D-arabino-heptonate. NAD(+) is bound at residue Lys-156. A 7-phospho-2-dehydro-3-deoxy-D-arabino-heptonate-binding site is contributed by Asn-157. Residues 174–177 (WLET) and Asn-185 contribute to the NAD(+) site. Glu-189 lines the Zn(2+) pocket. 7-phospho-2-dehydro-3-deoxy-D-arabino-heptonate is bound by residues 189-192 (EVIK) and Lys-258. Glu-268 (proton acceptor; for 3-dehydroquinate synthase activity) is an active-site residue. Residues 272 to 276 (RNLLN) and His-279 contribute to the 7-phospho-2-dehydro-3-deoxy-D-arabino-heptonate site. His-279 contributes to the Zn(2+) binding site. His-283 (proton acceptor; for 3-dehydroquinate synthase activity) is an active-site residue. The 7-phospho-2-dehydro-3-deoxy-D-arabino-heptonate site is built by His-295 and Lys-364. Residue His-295 participates in Zn(2+) binding. The EPSP synthase stretch occupies residues 405–871 (VYPFKDIPAD…WDVLHSELGA (467 aa)). The active-site For EPSP synthase activity is the Cys-853. The tract at residues 890–1080 (SVVIIGMRAA…IPSGRSAFVC (191 aa)) is shikimate kinase. 895-902 (GMRAAGKT) contributes to the ATP binding site. A 3-dehydroquinase region spans residues 1081–1293 (LTFDDLTEQT…AAPGQLTVAQ (213 aa)). The active-site Proton acceptor; for 3-dehydroquinate dehydratase activity is His-1198. Residue Lys-1227 is the Schiff-base intermediate with substrate; for 3-dehydroquinate dehydratase activity of the active site. The interval 1306–1588 (PKELFVVGKP…KAIFDAVTKE (283 aa)) is shikimate dehydrogenase.

In the N-terminal section; belongs to the sugar phosphate cyclases superfamily. Dehydroquinate synthase family. The protein in the 2nd section; belongs to the EPSP synthase family. It in the 3rd section; belongs to the shikimate kinase family. This sequence in the 4th section; belongs to the type-I 3-dehydroquinase family. In the C-terminal section; belongs to the shikimate dehydrogenase family. In terms of assembly, homodimer. Zn(2+) serves as cofactor.

The protein resides in the cytoplasm. The catalysed reaction is 7-phospho-2-dehydro-3-deoxy-D-arabino-heptonate = 3-dehydroquinate + phosphate. It carries out the reaction 3-dehydroquinate = 3-dehydroshikimate + H2O. It catalyses the reaction shikimate + NADP(+) = 3-dehydroshikimate + NADPH + H(+). The enzyme catalyses shikimate + ATP = 3-phosphoshikimate + ADP + H(+). The catalysed reaction is 3-phosphoshikimate + phosphoenolpyruvate = 5-O-(1-carboxyvinyl)-3-phosphoshikimate + phosphate. Its pathway is metabolic intermediate biosynthesis; chorismate biosynthesis; chorismate from D-erythrose 4-phosphate and phosphoenolpyruvate: step 2/7. It functions in the pathway metabolic intermediate biosynthesis; chorismate biosynthesis; chorismate from D-erythrose 4-phosphate and phosphoenolpyruvate: step 3/7. The protein operates within metabolic intermediate biosynthesis; chorismate biosynthesis; chorismate from D-erythrose 4-phosphate and phosphoenolpyruvate: step 4/7. It participates in metabolic intermediate biosynthesis; chorismate biosynthesis; chorismate from D-erythrose 4-phosphate and phosphoenolpyruvate: step 5/7. Its pathway is metabolic intermediate biosynthesis; chorismate biosynthesis; chorismate from D-erythrose 4-phosphate and phosphoenolpyruvate: step 6/7. In terms of biological role, the AROM polypeptide catalyzes 5 consecutive enzymatic reactions in prechorismate polyaromatic amino acid biosynthesis. In Saccharomyces cerevisiae (strain RM11-1a) (Baker's yeast), this protein is Pentafunctional AROM polypeptide.